We begin with the raw amino-acid sequence, 398 residues long: Bombesin receptor subtype-3 (398 aa).

The Extracellular segment spans residues 1 to 40 (MAQRQPHSPNQTLISITNDTESSSVVSNDNTNKGRSGDNS). N-linked (GlcNAc...) asparagine glycans are attached at residues N10 and N18. The helical transmembrane segment at 41 to 62 (PGIEALCAIYITYAVIISVGIL) threads the bilayer. The Cytoplasmic portion of the chain corresponds to 63-81 (GNAILIKVFFKTKSMQTVP). The helical transmembrane segment at 82 to 102 (NIFITSLAFGDLLLLLTCVPV) threads the bilayer. The Extracellular portion of the chain corresponds to 103–120 (DATHYLAEGWLFGRIGCK). Residues C119 and C202 are joined by a disulfide bond. The chain crosses the membrane as a helical span at residues 121–142 (VLSFIRLTSVGVSVFTLTILSA). At 143 to 162 (DRYKAVVKPLERQPSNAILK) the chain is on the cytoplasmic side. Residues 163–183 (TCIKAGCVWIVSMIFALPEAI) traverse the membrane as a helical segment. The Extracellular portion of the chain corresponds to 184–219 (FSNVYSFRDPNKNVTFESCTSYPVSKKLLQEIHSLL). The helical transmembrane segment at 220 to 240 (CFLVFYIIPLSIISVYYSLIA) threads the bilayer. Residues 241-271 (RTLYKSTLNIPTEEQGHARKQIESRKRIART) lie on the Cytoplasmic side of the membrane. The helical transmembrane segment at 272 to 292 (VLVLVALFALCWLPNHLLYLY) threads the bilayer. Residues 293–312 (HSFTSQTYVDPSAMHFIFTI) lie on the Extracellular side of the membrane. A helical transmembrane segment spans residues 313-332 (FSRVLAFSNSCVNPFALYWL). Residues 333–398 (SKTFQKHFKA…CSVKQAEDRV (66 aa)) are Cytoplasmic-facing. The S-palmitoyl cysteine moiety is linked to residue C346.

Belongs to the G-protein coupled receptor 1 family. Interacts with C6orf89.

The protein resides in the cell membrane. Its function is as follows. Role in sperm cell division, maturation, or function. This receptor mediates its action by association with G proteins that activate a phosphatidylinositol-calcium second messenger system. This Macaca mulatta (Rhesus macaque) protein is Bombesin receptor subtype-3 (BRS3).